Here is a 341-residue protein sequence, read N- to C-terminus: L-threonine 3-dehydrogenase (341 aa).

Cysteine 38 is a binding site for Zn(2+). Residues threonine 40 and histidine 43 each act as charge relay system in the active site. Histidine 63, glutamate 64, cysteine 93, cysteine 96, cysteine 99, and cysteine 107 together coordinate Zn(2+). NAD(+) is bound by residues isoleucine 175, aspartate 195, arginine 200, 262–264, and 286–287; these read LGI and IY.

The protein belongs to the zinc-containing alcohol dehydrogenase family. As to quaternary structure, homotetramer. Zn(2+) is required as a cofactor.

The protein resides in the cytoplasm. The catalysed reaction is L-threonine + NAD(+) = (2S)-2-amino-3-oxobutanoate + NADH + H(+). The protein operates within amino-acid degradation; L-threonine degradation via oxydo-reductase pathway; glycine from L-threonine: step 1/2. Its function is as follows. Catalyzes the NAD(+)-dependent oxidation of L-threonine to 2-amino-3-ketobutyrate. The chain is L-threonine 3-dehydrogenase from Edwardsiella ictaluri (strain 93-146).